The chain runs to 397 residues: MALLRGVFVVAAKRTPFGAYGGLLKDFTATDLSEFAAKAALSAGKVSPETVDSVIMGNVLQSSSDAIYLARHVGLRVGIPKETPALTINRLCGSGFQSIVNGCQEICVKEAEVVLCGGTESMSQAPYCVRNVRFGTKLGSDIKLEDSLWVSLTDQHVQLPMAMTAENLAVKHKISREECDKYALQSQQRWKAANDAGYFNDEMAPIEVKTKKGKQTMQVDEHARPQTTLEQLQKLPPVFKKDGTVTAGNASGVADGAGAVIIASEDAVKKHNFTPLARIVGYFVSGCDPSIMGIGPVPAISGALKKAGLSLKDMDLVEVNEAFAPQYLAVERSLDLDISKTNVNGGAIALGHPLGGSGSRITAHLVHELRRRGGKYAVGSACIGGGQGIAVIIQSTA.

A mitochondrion; not cleaved-targeting transit peptide spans 1 to 16 (MALLRGVFVVAAKRTP). N6-acetyllysine; alternate is present on lysine 25. Lysine 25 is subject to N6-succinyllysine; alternate. Lysine 45 is modified (N6-succinyllysine). Cysteine 92 (acyl-thioester intermediate) is an active-site residue. Position 119 is a phosphothreonine (threonine 119). At serine 121 the chain carries Phosphoserine. Tyrosine 127 is subject to Phosphotyrosine. Position 136 is a phosphothreonine (threonine 136). Lysine 137 carries the N6-acetyllysine; alternate modification. At lysine 137 the chain carries N6-succinyllysine; alternate. Serine 140 carries the post-translational modification Phosphoserine. N6-acetyllysine; alternate occurs at positions 143, 171, 191, and 209. N6-succinyllysine; alternate is present on residues lysine 143, lysine 171, lysine 191, and lysine 209. Lysine 211, lysine 212, and lysine 214 each carry N6-succinyllysine. The CoA site is built by arginine 224 and threonine 227. Position 234 is an N6-acetyllysine; alternate (lysine 234). An N6-succinyllysine; alternate modification is found at lysine 234. Lysine 240 is modified (N6-succinyllysine). Lysine 241 is modified (N6-acetyllysine). Serine 251 lines the CoA pocket. Residues lysine 269 and lysine 270 each carry the N6-acetyllysine modification. Lysine 305 bears the N6-acetyllysine; alternate mark. Lysine 305 carries the post-translational modification N6-succinyllysine; alternate. Serine 310 carries the post-translational modification Phosphoserine. Lysine 312 carries the post-translational modification N6-acetyllysine; alternate. Residue lysine 312 is modified to N6-succinyllysine; alternate. A Phosphoserine modification is found at serine 333. N6-acetyllysine occurs at positions 340 and 375. Residue cysteine 382 is the Proton donor/acceptor of the active site.

This sequence belongs to the thiolase-like superfamily. Thiolase family. Homotetramer. Interacts with BNIP3.

It localises to the mitochondrion. It catalyses the reaction an acyl-CoA + acetyl-CoA = a 3-oxoacyl-CoA + CoA. The catalysed reaction is 2 acetyl-CoA = acetoacetyl-CoA + CoA. It carries out the reaction acetyl-CoA + H2O = acetate + CoA + H(+). The enzyme catalyses propanoyl-CoA + H2O = propanoate + CoA + H(+). It catalyses the reaction butanoyl-CoA + H2O = butanoate + CoA + H(+). The catalysed reaction is hexanoyl-CoA + H2O = hexanoate + CoA + H(+). It carries out the reaction octanoyl-CoA + H2O = octanoate + CoA + H(+). The enzyme catalyses decanoyl-CoA + H2O = decanoate + CoA + H(+). It catalyses the reaction dodecanoyl-CoA + H2O = dodecanoate + CoA + H(+). The catalysed reaction is tetradecanoyl-CoA + H2O = tetradecanoate + CoA + H(+). It carries out the reaction hexadecanoyl-CoA + H2O = hexadecanoate + CoA + H(+). Its pathway is lipid metabolism; fatty acid beta-oxidation. Its function is as follows. In the production of energy from fats, this is one of the enzymes that catalyzes the last step of the mitochondrial beta-oxidation pathway, an aerobic process breaking down fatty acids into acetyl-CoA. Using free coenzyme A/CoA, catalyzes the thiolytic cleavage of medium- to long-chain unbranched 3-oxoacyl-CoAs into acetyl-CoA and a fatty acyl-CoA shortened by two carbon atoms. Also catalyzes the condensation of two acetyl-CoA molecules into acetoacetyl-CoA and could be involved in the production of ketone bodies. Also displays hydrolase activity on various fatty acyl-CoAs. Thereby, could be responsible for the production of acetate in a side reaction to beta-oxidation. Abolishes BNIP3-mediated apoptosis and mitochondrial damage. In Homo sapiens (Human), this protein is 3-ketoacyl-CoA thiolase, mitochondrial (ACAA2).